We begin with the raw amino-acid sequence, 280 residues long: C-type lectin domain family 1 member A (280 aa).

Residues 1-44 (MQAKYSSTRDMLDDDGDTTMSLHSQGSATTRHPEPRRTEHRAPS) form a disordered region. Residues 1-52 (MQAKYSSTRDMLDDDGDTTMSLHSQGSATTRHPEPRRTEHRAPSSTWRPVAL) lie on the Cytoplasmic side of the membrane. Over residues 18 to 30 (TTMSLHSQGSATT) the composition is skewed to polar residues. A compositionally biased stretch (basic and acidic residues) spans 31 to 42 (RHPEPRRTEHRA). Residues 53-73 (TLLTLCLVLLIGLAALGLLFF) traverse the membrane as a helical; Signal-anchor for type II membrane protein segment. Residues 74–280 (QYYQLSNTGQ…VPPETLGEGD (207 aa)) lie on the Extracellular side of the membrane. N-linked (GlcNAc...) asparagine glycosylation is found at N95 and N169. One can recognise a C-type lectin domain in the interval 144 to 258 (HGDNCYQFYK…CKELKRCVCE (115 aa)). 2 cysteine pairs are disulfide-bonded: C165-C257 and C236-C249.

In terms of tissue distribution, expressed preferentially in dendritic cells.

The protein resides in the membrane. In Homo sapiens (Human), this protein is C-type lectin domain family 1 member A (CLEC1A).